The primary structure comprises 411 residues: Adenylosuccinate synthetase (411 aa).

GTP contacts are provided by residues 11 to 17 and 39 to 41; these read GDEGKGK and GHT. D12 serves as the catalytic Proton acceptor. Mg(2+)-binding residues include D12 and G39. IMP contacts are provided by residues 12–15, 37–40, T121, R135, Q215, T230, and R294; these read DEGK and NAGH. The active-site Proton donor is H40. Substrate is bound at residue 290 to 296; the sequence is TTTKRPR. GTP-binding positions include R296, 322–324, and 400–402; these read KLD and STS.

This sequence belongs to the adenylosuccinate synthetase family. Homodimer. Mg(2+) serves as cofactor.

It is found in the cytoplasm. It carries out the reaction IMP + L-aspartate + GTP = N(6)-(1,2-dicarboxyethyl)-AMP + GDP + phosphate + 2 H(+). It participates in purine metabolism; AMP biosynthesis via de novo pathway; AMP from IMP: step 1/2. Plays an important role in the de novo pathway of purine nucleotide biosynthesis. Catalyzes the first committed step in the biosynthesis of AMP from IMP. This Helicobacter pylori (strain HPAG1) protein is Adenylosuccinate synthetase.